Here is a 144-residue protein sequence, read N- to C-terminus: Leghemoglobin-1 (144 aa).

One can recognise a Globin domain in the interval 2 to 144 (GFTEKQEALV…DGLATAIKAA (143 aa)). Nitrated tyrosine is present on residues tyrosine 25 and tyrosine 30. Serine 45 serves as a coordination point for heme b. At serine 45 the chain carries Phosphoserine. An O2-binding site is contributed by histidine 62. The heme b site is built by lysine 65, histidine 93, and lysine 96. At tyrosine 134 the chain carries Nitrated tyrosine.

This sequence belongs to the plant globin family. Monomer. Post-translationally, nitrated in effective nodules and particularly in hypoxic conditions; this mechanism may play a protective role in the symbiosis by buffering toxic peroxynitrite NO(2)(-). Nitration level decrease during nodule senescence. Phosphorylation at Ser-45 disrupts the molecular environment of its porphyrin ring oxygen binding pocket, thus leading to a reduced oxygen consumption and to the delivery of oxygen O(2) to symbiosomes. As to expression, root nodules.

It localises to the cytoplasm. The protein resides in the cytosol. It is found in the nucleus. In terms of biological role, leghemoglobin that reversibly binds oxygen O(2) through a pentacoordinated heme iron. In root nodules, facilitates the diffusion of oxygen to the bacteroids while preventing the bacterial nitrogenase from being inactivated by buffering dioxygen, nitric oxide and carbon monoxide, and promoting the formation of reactive oxygen species (ROS, e.g. H(2)O(2)). This role is essential for symbiotic nitrogen fixation (SNF). In Vicia faba (Broad bean), this protein is Leghemoglobin-1.